The following is a 331-amino-acid chain: Aldo-keto reductase YhdN (331 aa).

Residues 20-21 and D52 contribute to the NADP(+) site; that span reads TW. The active-site Proton donor is the Y57. Residues Q175, 203 to 208, K214, R227, 280 to 282, and Q286 contribute to the NADP(+) site; these read YGSLCR and GAR.

Belongs to the aldo/keto reductase family. Aldo/keto reductase 11 subfamily. Monomer.

Aldo-keto reductase (AKR) that displays broad substrate specificity in vitro. Is able to reduce the standard AKR substrates DL-glyceraldehyde, D-erythrose, methylglyoxal, p-nitrobenzaldehyde, benzaldehyde and butyraldehyde, in the presence of NADPH. Cannot use NADH as a cosubstrate. Does not act on glucose, 2-pyridine carboxyaldehyde, fructose and xylose. The physiological function of this enzyme is not clear. May play a role in bacterial stress response and/or in detoxification of reactive aldehydes. The protein is Aldo-keto reductase YhdN (yhdN) of Bacillus subtilis (strain 168).